Reading from the N-terminus, the 887-residue chain is DNA mismatch repair protein MutS (887 aa).

Residue 602–609 participates in ATP binding; the sequence is GPNMSGKS.

It belongs to the DNA mismatch repair MutS family.

This protein is involved in the repair of mismatches in DNA. It is possible that it carries out the mismatch recognition step. This protein has a weak ATPase activity. The sequence is that of DNA mismatch repair protein MutS from Staphylococcus saprophyticus subsp. saprophyticus (strain ATCC 15305 / DSM 20229 / NCIMB 8711 / NCTC 7292 / S-41).